A 661-amino-acid polypeptide reads, in one-letter code: MAFDVSCFFWVVLFSAGCKVITSWDQMCIEKEANKTYNCENLGLSEIPDTLPNTTEFLEFSFNFLPTIHNRTFSRLMNLTFLDLTRCQINWIHEDTFQSHHQLSTLVLTGNPLIFMAETSLNGPKSLKHLFLIQTGISNLEFIPVHNLENLESLYLGSNHISSIKFPKDFPARNLKVLDFQNNAIHYISREDMRSLEQAINLSLNFNGNNVKGIELGAFDSTIFQSLNFGGTPNLSVIFNGLQNSTTQSLWLGTFEDIDDEDISSAMLKGLCEMSVESLNLQEHRFSDISSTTFQCFTQLQELDLTATHLKGLPSGMKGLNLLKKLVLSVNHFDQLCQISAANFPSLTHLYIRGNVKKLHLGVGCLEKLGNLQTLDLSHNDIEASDCCSLQLKNLSHLQTLNLSHNEPLGLQSQAFKECPQLELLDLAFTRLHINAPQSPFQNLHFLQVLNLTYCFLDTSNQHLLAGLPVLRHLNLKGNHFQDGTITKTNLLQTVGSLEVLILSSCGLLSIDQQAFHSLGKMSHVDLSHNSLTCDSIDSLSHLKGIYLNLAANSINIISPRLLPILSQQSTINLSHNPLDCTCSNIHFLTWYKENLHKLEGSEETTCANPPSLRGVKLSDVKLSCGITAIGIFFLIVFLLLLAILLFFAVKYLLRWKYQHI.

The N-terminal stretch at 1 to 23 (MAFDVSCFFWVVLFSAGCKVITS) is a signal peptide. Over 24–626 (WDQMCIEKEA…KLSDVKLSCG (603 aa)) the chain is Extracellular. The LRRNT domain maps to 33 to 53 (ANKTYNCENLGLSEIPDTLPN). N-linked (GlcNAc...) asparagine glycosylation is found at N34, N53, N70, and N78. 7 LRR repeats span residues 54–75 (TTEFLEFSFNFLPTIHNRTFSR), 78–99 (NLTFLDLTRCQINWIHEDTFQS), 102–123 (QLSTLVLTGNPLIFMAETSLNG), 126–147 (SLKHLFLIQTGISNLEFIPVHN), 150–171 (NLESLYLGSNHISSIKFPKDFP), 174–195 (NLKVLDFQNNAIHYISREDMRS), and 201–221 (NLSLNFNGNNVKGIELGAFDS). N-linked (GlcNAc...) asparagine glycans are attached at residues N201, N234, and N244. LRR repeat units lie at residues 275–296 (SVESLNLQEHRFSDISSTTFQC), 299–320 (QLQELDLTATHLKGLPSGMKGL), 322–343 (LLKKLVLSVNHFDQLCQISAAN), 346–366 (SLTHLYIRGNVKKLHLGVGCL), and 371–391 (NLQTLDLSHNDIEASDCCSLQ). Residues N394 and N402 are each glycosylated (N-linked (GlcNAc...) asparagine). LRR repeat units follow at residues 397-418 (HLQTLNLSHNEPLGLQSQAFKE), 421-442 (QLELLDLAFTRLHINAPQSPFQ), 446-466 (FLQVLNLTYCFLDTSNQHLLA), 470-493 (VLRHLNLKGNHFQDGTITKTNLLQ), 497-518 (SLEVLILSSCGLLSIDQQAFHS), 521-544 (KMSHVDLSHNSLTCDSIDSLSHLK), and 546-564 (IYLNLAANSINIISPRLLP). An N-linked (GlcNAc...) asparagine glycan is attached at N451. N573 carries N-linked (GlcNAc...) asparagine glycosylation. Residues 577–627 (NPLDCTCSNIHFLTWYKENLHKLEGSEETTCANPPSLRGVKLSDVKLSCGI) enclose the LRRCT domain. Residues 627-650 (ITAIGIFFLIVFLLLLAILLFFAV) traverse the membrane as a helical segment. Residues 651-661 (KYLLRWKYQHI) lie on the Cytoplasmic side of the membrane.

It belongs to the Toll-like receptor family. As to quaternary structure, M-shaped tetramer of two CD180-LY86 heterodimers. As to expression, expressed mainly on mature peripherical B cells. Detected in spleen, lymph node and appendix. Not detected in pre-B and -T cells.

It is found in the cell membrane. In terms of biological role, may cooperate with MD-1 and TLR4 to mediate the innate immune response to bacterial lipopolysaccharide (LPS) in B-cells. Leads to NF-kappa-B activation. Also involved in the life/death decision of B-cells. The chain is CD180 antigen (CD180) from Homo sapiens (Human).